The following is a 372-amino-acid chain: Chaperone protein DnaJ (372 aa).

The J domain occupies 5 to 70 (DYYDLLEVGR…EKRAGYDRYG (66 aa)). The segment at 134–212 (GIQAPIHYVT…CGGSGRRRDE (79 aa)) adopts a CR-type zinc-finger fold. Zn(2+) contacts are provided by cysteine 147, cysteine 150, cysteine 164, cysteine 167, cysteine 186, cysteine 189, cysteine 200, and cysteine 203. CXXCXGXG motif repeat units lie at residues 147–154 (CDTCQGTG), 164–171 (CHTCQGSG), 186–193 (CTTCYGEG), and 200–207 (CKKCGGSG).

Belongs to the DnaJ family. In terms of assembly, homodimer. Requires Zn(2+) as cofactor.

It is found in the cytoplasm. Functionally, participates actively in the response to hyperosmotic and heat shock by preventing the aggregation of stress-denatured proteins and by disaggregating proteins, also in an autonomous, DnaK-independent fashion. Unfolded proteins bind initially to DnaJ; upon interaction with the DnaJ-bound protein, DnaK hydrolyzes its bound ATP, resulting in the formation of a stable complex. GrpE releases ADP from DnaK; ATP binding to DnaK triggers the release of the substrate protein, thus completing the reaction cycle. Several rounds of ATP-dependent interactions between DnaJ, DnaK and GrpE are required for fully efficient folding. Also involved, together with DnaK and GrpE, in the DNA replication of plasmids through activation of initiation proteins. This Wolbachia pipientis wMel protein is Chaperone protein DnaJ.